We begin with the raw amino-acid sequence, 3412 residues long: Genome polyprotein (3412 aa).

An interaction with host EXOC1 region spans residues 2–15 (SKKPGKPGRNRVVN). Topologically, residues 2 to 108 (SKKPGKPGRN…PSKKRGGTRS (107 aa)) are cytoplasmic. Positions 37–72 (LLDGRGPVRFILAILTFFRFTALQPTEALKRRWRAV) are hydrophobic; homodimerization of capsid protein C. Positions 104–121 (GGTRSLLGLAALIGLASS) are cleaved as a propeptide — ER anchor for the capsid protein C, removed in mature form by serine protease NS3. A helical membrane pass occupies residues 109 to 129 (LLGLAALIGLASSLQLSTYQG). Residues 130–247 (KVLMSINKTD…TTKYLTKVEN (118 aa)) are Extracellular-facing. An N-linked (GlcNAc...) asparagine; by host glycan is attached at Asn-136. The helical transmembrane segment at 248–268 (WVLRNPGYALVALAIGWMLGS) threads the bilayer. Residues 269 to 273 (NNTQR) are Cytoplasmic-facing. The helical transmembrane segment at 274-288 (VVFVIMLMLIAPAYS) threads the bilayer. The Extracellular portion of the chain corresponds to 289-741 (FNCLGTSNRD…QVFGGAFRTL (453 aa)). 8 cysteine pairs are disulfide-bonded: Cys-291–Cys-318, Cys-348–Cys-404, Cys-348–Cys-409, Cys-362–Cys-393, Cys-380–Cys-404, Cys-380–Cys-409, Cys-478–Cys-576, and Cys-593–Cys-624. Positions 386-399 (DRGWGNGCGLFGKG) are fusion peptide. The chain crosses the membrane as a helical span at residues 742–762 (FGGMSWITQGLLGALLLWMGL). The Cytoplasmic segment spans residues 763–768 (QARDRS). Residues 769–789 (ISLTLLAVGGILIFLATSVQA) form a helical membrane-spanning segment. At 790–1214 (DSGCAIDLQR…AFAEMNTGGD (425 aa)) the chain is on the extracellular side. 2 cysteine pairs are disulfide-bonded: Cys-793-Cys-804 and Cys-844-Cys-932. Asn-919, Asn-964, and Asn-996 each carry an N-linked (GlcNAc...) asparagine; by host glycan. 6 disulfides stabilise this stretch: Cys-968/Cys-1012, Cys-1069/Cys-1118, Cys-1080/Cys-1101, Cys-1080/Cys-1102, Cys-1101/Cys-1105, and Cys-1102/Cys-1105. A helical membrane pass occupies residues 1215–1235 (VIHLALVAVFKVQPAFLAGLF). Residues 1236–1245 (LRMQWSNQEN) are Cytoplasmic-facing. Residues 1246 to 1266 (ILMVIGAAFLQMAANDLKLEV) form a helical membrane-spanning segment. The Lumenal portion of the chain corresponds to 1267–1288 (LPILNAMSIAWMLIRAMKEGKV). The chain crosses the membrane as a helical span at residues 1289–1303 (AMYALPILCALTPGM). Arg-1304 is a topological domain (cytoplasmic). A helical membrane pass occupies residues 1305-1325 (MAGLDVIRCLLLIIGIVTLLN). At 1326 to 1339 (ERRESVAKKKGGYL) the chain is on the lumenal side. Residues 1340-1360 (LAAALCQAGVCSPLIMMGGLI) form a helical membrane-spanning segment. The Cytoplasmic segment spans residues 1361 to 1369 (LAHPNGKRS). Residues 1370–1390 (WPASEVLTGVGLMCALAGGLL) form a helical membrane-spanning segment. At 1391–1393 (EFE) the chain is on the lumenal side. A helical membrane pass occupies residues 1394-1414 (ETSMVVPFAIAGLMYITYTVS). The Cytoplasmic portion of the chain corresponds to 1415-1471 (GKAAEMWIEKAADITWEQNAEITGTSPRLDVDLDSHGNFKLLNDPGAPVHLFALRFI). Positions 1422–1461 (IEKAADITWEQNAEITGTSPRLDVDLDSHGNFKLLNDPGA) are interacts with and activates NS3 protease. The segment at residues 1472–1492 (LLGLSARFHWFIPFGVLGFWL) is an intramembrane region (helical). Residues 1493–2167 (LGKHSKRGGA…KEALAELPDS (675 aa)) lie on the Cytoplasmic side of the membrane. Residues 1500 to 1677 (GGALWDVPSP…ERTEEPIPDA (178 aa)) form the Peptidase S7 domain. Active-site charge relay system; for serine protease NS3 activity residues include His-1550, Asp-1574, and Ser-1634. A Helicase ATP-binding domain is found at 1680–1836 (EEMLRKRKLT…DSNSPILDVE (157 aa)). An important for RNA-binding region spans residues 1684–1687 (RKRK). An ATP-binding site is contributed by 1693 to 1700 (LHPGAGKT). The short motif at 1784 to 1787 (DEAH) is the DEAH box element. Positions 1847–2011 (GYEWITNFTG…GLVAQMYQPE (165 aa)) constitute a Helicase C-terminal domain. The segment at 2162-2166 (AELPD) is regulates the ATPase activity of NS3 helicase. Residues 2168–2188 (LETLLLIGMLCVMSMGTFIFL) form a helical membrane-spanning segment. Residues 2189 to 2193 (MNRKG) are Lumenal-facing. The helical intramembrane region spans 2194–2214 (VGKMGLGAFVMTLATALLWAA). Residue Glu-2215 is a topological domain, lumenal. The helical transmembrane segment at 2216-2236 (VPGTQIAGVLLIVFLLMIVLI) threads the bilayer. Residues 2237–2251 (PEPEKQRSQTDNQLA) lie on the Cytoplasmic side of the membrane. A helical membrane pass occupies residues 2252–2266 (VFLICIMTLMGVVAA). The Lumenal segment spans residues 2267 to 2308 (NEMGLLEKTKSDIAKLFGSQPGSVGFATRTTPWDISLDIKPA). The helical intramembrane region spans 2309-2329 (TAWALYAAATMVMTPLIKHLI). Residues 2330-2376 (TTQYVNFSLTAIASQAGVLLGLTNGMPFTAMDLSVPLLVLGCWNQMT) are Lumenal-facing. A helical membrane pass occupies residues 2377-2397 (LPSLAVAVMLLAIHYAFMIPG). Residues 2398–2440 (WQAEAMRAAQRRTAAGIMKNAVVDGIVATDIPDLSPATPMTEK) are Cytoplasmic-facing. Residues 2441–2461 (KMGQILLIAAAVLAVLVRPGI) form a helical membrane-spanning segment. Over 2462 to 2466 (CSIKE) the chain is Lumenal. The chain crosses the membrane as a helical span at residues 2467–2487 (FGVLGSAALVTLIEGTAGVVW). Over 2488 to 3412 (NCTTAVGLCN…IGEEEYRDYM (925 aa)) the chain is Cytoplasmic. Positions 2525–2790 (GGGKGATLGE…DVNLGSGTRS (266 aa)) constitute an mRNA cap 0-1 NS5-type MT domain. S-adenosyl-L-methionine is bound at residue Ser-2580. Ser-2580 is subject to Phosphoserine. The For 2'-O-MTase activity role is filled by Lys-2585. The S-adenosyl-L-methionine site is built by Gly-2610, Trp-2611, Thr-2628, Lys-2629, Asp-2655, and Val-2656. Asp-2670 (for 2'-O-MTase activity) is an active-site residue. An S-adenosyl-L-methionine-binding site is contributed by Ile-2671. Active-site for 2'-O-MTase activity residues include Lys-2706 and Glu-2742. Tyr-2744 contributes to the S-adenosyl-L-methionine binding site. The span at 2771–2780 (QNRSGPRYEE) shows a compositional bias: basic and acidic residues. Residues 2771–2791 (QNRSGPRYEEDVNLGSGTRSV) are disordered. Zn(2+) is bound by residues Glu-2964, His-2968, Cys-2973, and Cys-2976. A RdRp catalytic domain is found at 3054–3206 (GKMYADDTAG…KPIDDRFATA (153 aa)). The Zn(2+) site is built by His-3241, Cys-3257, and Cys-3376.

This sequence in the N-terminal section; belongs to the class I-like SAM-binding methyltransferase superfamily. mRNA cap 0-1 NS5-type methyltransferase family. Homodimer. Interacts (via N-terminus) with host EXOC1 (via C-terminus); this interaction results in EXOC1 degradation through the proteasome degradation pathway. As to quaternary structure, forms heterodimers with envelope protein E in the endoplasmic reticulum and Golgi. In terms of assembly, homodimer; in the endoplasmic reticulum and Golgi. Interacts with protein prM. Interacts with non-structural protein 1. Homodimer; Homohexamer when secreted. Interacts with envelope protein E. NS1 interacts with NS4B. Interacts with host complement protein CFH; this interaction leads to the degradation of C3. As to quaternary structure, interacts (via N-terminus) with serine protease NS3. In terms of assembly, forms a heterodimer with serine protease NS3. May form homooligomers. Forms a heterodimer with NS2B. Interacts with non-structural protein 2A (via N-terminus). Interacts with NS4B. Interacts with unphosphorylated RNA-directed RNA polymerase NS5; this interaction stimulates RNA-directed RNA polymerase NS5 guanylyltransferase activity. As to quaternary structure, interacts with serine protease NS3. In terms of assembly, homodimer. Interacts with host STAT2; this interaction inhibits the phosphorylation of the latter, and, when all viral proteins are present (polyprotein), targets STAT2 for degradation. Interacts with serine protease NS3. In terms of processing, specific enzymatic cleavages in vivo yield mature proteins. Cleavages in the lumen of endoplasmic reticulum are performed by host signal peptidase, whereas cleavages in the cytoplasmic side are performed by serine protease NS3. Signal cleavage at the 2K-4B site requires a prior NS3 protease-mediated cleavage at the 4A-2K site. Cleaved in post-Golgi vesicles by a host furin, releasing the mature small envelope protein M, and peptide pr. This cleavage is incomplete as up to 30% of viral particles still carry uncleaved prM. Post-translationally, N-glycosylated. In terms of processing, N-glycosylated. The excreted form is glycosylated and this is required for efficient secretion of the protein from infected cells. Phosphorylated on serines residues. This phosphorylation may trigger NS5 nuclear localization.

The protein localises to the virion. The protein resides in the host nucleus. It localises to the host cytoplasm. Its subcellular location is the host perinuclear region. It is found in the secreted. The protein localises to the virion membrane. The protein resides in the host endoplasmic reticulum membrane. It catalyses the reaction Selective hydrolysis of -Xaa-Xaa-|-Yaa- bonds in which each of the Xaa can be either Arg or Lys and Yaa can be either Ser or Ala.. The catalysed reaction is RNA(n) + a ribonucleoside 5'-triphosphate = RNA(n+1) + diphosphate. The enzyme catalyses a ribonucleoside 5'-triphosphate + H2O = a ribonucleoside 5'-diphosphate + phosphate + H(+). It carries out the reaction ATP + H2O = ADP + phosphate + H(+). It catalyses the reaction a 5'-end (5'-triphosphoguanosine)-ribonucleoside in mRNA + S-adenosyl-L-methionine = a 5'-end (N(7)-methyl 5'-triphosphoguanosine)-ribonucleoside in mRNA + S-adenosyl-L-homocysteine. The catalysed reaction is a 5'-end (N(7)-methyl 5'-triphosphoguanosine)-ribonucleoside in mRNA + S-adenosyl-L-methionine = a 5'-end (N(7)-methyl 5'-triphosphoguanosine)-(2'-O-methyl-ribonucleoside) in mRNA + S-adenosyl-L-homocysteine + H(+). In terms of biological role, plays a role in virus budding by binding to the cell membrane and gathering the viral RNA into a nucleocapsid that forms the core of a mature virus particle. During virus entry, may induce genome penetration into the host cytoplasm after hemifusion induced by the surface proteins. Can migrate to the cell nucleus where it modulates host functions. Overcomes the anti-viral effects of host EXOC1 by sequestering and degrading the latter through the proteasome degradation pathway. Its function is as follows. Inhibits RNA silencing by interfering with host Dicer. Functionally, prevents premature fusion activity of envelope proteins in trans-Golgi by binding to envelope protein E at pH6.0. After virion release in extracellular space, gets dissociated from E dimers. Acts as a chaperone for envelope protein E during intracellular virion assembly by masking and inactivating envelope protein E fusion peptide. prM is the only viral peptide matured by host furin in the trans-Golgi network probably to avoid catastrophic activation of the viral fusion activity in acidic Golgi compartment prior to virion release. prM-E cleavage is inefficient, and many virions are only partially matured. These uncleaved prM would play a role in immune evasion. In terms of biological role, may play a role in virus budding. Exerts cytotoxic effects by activating a mitochondrial apoptotic pathway through M ectodomain. May display a viroporin activity. Its function is as follows. Binds to host cell surface receptor and mediates fusion between viral and cellular membranes. Envelope protein is synthesized in the endoplasmic reticulum in the form of heterodimer with protein prM. They play a role in virion budding in the ER, and the newly formed immature particle is covered with 60 spikes composed of heterodimer between precursor prM and envelope protein E. The virion is transported to the Golgi apparatus where the low pH causes dissociation of PrM-E heterodimers and formation of E homodimers. prM-E cleavage is inefficient, and many virions are only partially matured. These uncleaved prM would play a role in immune evasion. Functionally, involved in immune evasion, pathogenesis and viral replication. Once cleaved off the polyprotein, is targeted to three destinations: the viral replication cycle, the plasma membrane and the extracellular compartment. Essential for viral replication. Required for formation of the replication complex and recruitment of other non-structural proteins to the ER-derived membrane structures. Excreted as a hexameric lipoparticle that plays a role against host immune response. Antagonizing the complement function. Binds to the host macrophages and dendritic cells. Inhibits signal transduction originating from Toll-like receptor 3 (TLR3). Component of the viral RNA replication complex that functions in virion assembly and antagonizes the host alpha/beta interferon antiviral response. In terms of biological role, required cofactor for the serine protease function of NS3. May have membrane-destabilizing activity and form viroporins. Its function is as follows. Displays three enzymatic activities: serine protease, NTPase and RNA helicase. NS3 serine protease, in association with NS2B, performs its autocleavage and cleaves the polyprotein at dibasic sites in the cytoplasm: C-prM, NS2A-NS2B, NS2B-NS3, NS3-NS4A, NS4A-2K and NS4B-NS5. NS3 RNA helicase binds RNA and unwinds dsRNA in the 3' to 5' direction. Functionally, regulates the ATPase activity of the NS3 helicase activity. NS4A allows NS3 helicase to conserve energy during unwinding. Functions as a signal peptide for NS4B and is required for the interferon antagonism activity of the latter. In terms of biological role, induces the formation of ER-derived membrane vesicles where the viral replication takes place. Inhibits interferon (IFN)-induced host STAT1 phosphorylation and nuclear translocation, thereby preventing the establishment of cellular antiviral state by blocking the IFN-alpha/beta pathway. Inhibits STAT2 translocation in the nucleus after IFN-alpha treatment. Its function is as follows. Replicates the viral (+) and (-) RNA genome, and performs the capping of genomes in the cytoplasm. NS5 methylates viral RNA cap at guanine N-7 and ribose 2'-O positions. Besides its role in RNA genome replication, also prevents the establishment of cellular antiviral state by blocking the interferon-alpha/beta (IFN-alpha/beta) signaling pathway. Inhibits host TYK2 and STAT2 phosphorylation, thereby preventing activation of JAK-STAT signaling pathway. The polypeptide is Genome polyprotein (Agelaius tricolor (Tricolored blackbird)).